The chain runs to 667 residues: Cyclin-dependent kinase 17 (667 aa).

2 disordered regions span residues 1 to 70 (MTAY…SSLN) and 85 to 184 (DSEY…LRKM). 2 stretches are compositionally biased toward acidic residues: residues 99–111 (EDFDEEEEDEFED) and 119–144 (DEDDVEYEDEDDEDDIVVEEEEITPE). The span at 151-164 (TGVTTQTTPPSNNT) shows a compositional bias: polar residues. One can recognise a Protein kinase domain in the interval 328–609 (YEKLDKLGEG…AAEAVKHPFL (282 aa)). Residues 334-342 (LGEGTYATV) and Lys357 each bind ATP. The active-site Proton acceptor is the Asp449. The Mg(2+) site is built by Asn454 and Asp467. Residues 642 to 667 (HHHSSRRHHRGTLVKDKYRMHSSHHT) form a disordered region. The segment covering 644-653 (HSSRRHHRGT) has biased composition (basic residues).

This sequence belongs to the protein kinase superfamily. CMGC Ser/Thr protein kinase family. CDC2/CDKX subfamily. Interacts with cyy-1; the interaction is required to activate pct-1. It depends on Mg(2+) as a cofactor.

The protein localises to the cytoplasm. The protein resides in the cell projection. It is found in the dendrite. Its subcellular location is the axon. The enzyme catalyses L-seryl-[protein] + ATP = O-phospho-L-seryl-[protein] + ADP + H(+). It carries out the reaction L-threonyl-[protein] + ATP = O-phospho-L-threonyl-[protein] + ADP + H(+). In terms of biological role, serine/threonine-protein kinase, which, in association with cyy-1, regulates the trafficking of synaptic vesicles in the DA9 motor neuron and probably also in the DD motor neurons and in RIA interneurons. Sufficient for synaptic vesicle trafficking in the DA9 motor neuron. The sequence is that of Cyclin-dependent kinase 17 from Caenorhabditis elegans.